The following is a 262-amino-acid chain: ABSCISIC ACID-INSENSITIVE 5-like protein 3 (262 aa).

3 positions are modified to phosphoserine: serine 21, serine 43, and serine 66. Threonine 104 is subject to Phosphothreonine. The region spanning 190 to 253 is the bZIP domain; sequence VERRQKRMIK…SEPPPDPKWK (64 aa). The interval 192–211 is basic motif; it reads RRQKRMIKNRESAARSRARK. A leucine-zipper region spans residues 218–232; that stretch reads LEIKVSRLEEENEKL. Residues 239-252 show a composition bias toward basic and acidic residues; sequence EKILPSEPPPDPKW. Residues 239-262 form a disordered region; that stretch reads EKILPSEPPPDPKWKLRRTNSASL.

Belongs to the bZIP family. ABI5 subfamily. As to quaternary structure, DNA-binding heterodimer with ABI5/DPBF1, DPBF2 or AREB3/DPBF3. Interacts with the AFP proteins AFP2, AFP3 and AFP4. Predominantly expressed in seeds.

The protein resides in the nucleus. Binds to the embryo specification element and the ABA-responsive element (ABRE) of the Dc3 gene promoter and to the ABRE of the Em1 gene promoter. Could participate in abscisic acid-regulated gene expression during seed development. This is ABSCISIC ACID-INSENSITIVE 5-like protein 3 (DPBF4) from Arabidopsis thaliana (Mouse-ear cress).